A 108-amino-acid chain; its full sequence is Cytochrome c6 (108 aa).

An N-terminal signal peptide occupies residues 1–23 (MRLLFAFFIICHIFTNNVQLTFA). Residues cysteine 37, cysteine 40, histidine 41, and methionine 81 each contribute to the heme c site.

The protein belongs to the cytochrome c family. PetJ subfamily. In terms of assembly, monomer. Binds 1 heme c group covalently per subunit.

The protein localises to the plastid. It is found in the chloroplast thylakoid lumen. Functionally, functions as an electron carrier between membrane-bound cytochrome b6-f and photosystem I in oxygenic photosynthesis. The chain is Cytochrome c6 from Gracilaria tenuistipitata var. liui (Red alga).